A 490-amino-acid polypeptide reads, in one-letter code: Betaine aldehyde dehydrogenase (490 aa).

Asp93 is a K(+) binding site. 150-152 serves as a coordination point for NAD(+); it reads GAW. Lys162 serves as the catalytic Charge relay system. NAD(+) is bound at residue 176-179; the sequence is KPSE. Val180 contacts K(+). 230–233 provides a ligand contact to NAD(+); sequence GIAS. Leu246 serves as a coordination point for K(+). Residue Glu252 is the Proton acceptor of the active site. NAD(+) contacts are provided by Gly254, Cys286, and Glu387. The active-site Nucleophile is the Cys286. Cys286 is subject to Cysteine sulfenic acid (-SOH). 2 residues coordinate K(+): Lys457 and Gly460. Glu464 functions as the Charge relay system in the catalytic mechanism.

Belongs to the aldehyde dehydrogenase family. Dimer of dimers. The cofactor is K(+).

It carries out the reaction betaine aldehyde + NAD(+) + H2O = glycine betaine + NADH + 2 H(+). It participates in amine and polyamine biosynthesis; betaine biosynthesis via choline pathway; betaine from betaine aldehyde: step 1/1. Its function is as follows. Involved in the biosynthesis of the osmoprotectant glycine betaine. Catalyzes the irreversible oxidation of betaine aldehyde to the corresponding acid. The chain is Betaine aldehyde dehydrogenase from Pectobacterium carotovorum subsp. carotovorum (strain PC1).